The sequence spans 570 residues: Methionine--tRNA ligase (570 aa).

A 'HIGH' region motif is present at residues 14–24 (PYINGIKHLGN). Positions 146, 149, 159, and 162 each coordinate Zn(2+). Positions 347-351 (QFSTS) match the 'KMSKS' region motif. Residue T350 participates in ATP binding.

The protein belongs to the class-I aminoacyl-tRNA synthetase family. MetG type 1 subfamily. As to quaternary structure, monomer. Zn(2+) serves as cofactor.

The protein localises to the cytoplasm. It catalyses the reaction tRNA(Met) + L-methionine + ATP = L-methionyl-tRNA(Met) + AMP + diphosphate. Is required not only for elongation of protein synthesis but also for the initiation of all mRNA translation through initiator tRNA(fMet) aminoacylation. The polypeptide is Methionine--tRNA ligase (Jannaschia sp. (strain CCS1)).